A 315-amino-acid chain; its full sequence is Protein MFI (315 aa).

In terms of assembly, can homodimerize. Interacts with MFF; the interaction inhibits MFF interaction with DNM1L. Enriched in the pancreatic beta cell and the testis and is expressed at low levels in other tissues tested.

Its subcellular location is the cytoplasm. It localises to the cytosol. The protein localises to the mitochondrion outer membrane. Its function is as follows. Acts as an inhibitor of mitochondrial fission. Interacts with MFF and prevents DNM1L recruitment to mitochondria, promoting a more fused mitochondrial network. This chain is Protein MFI, found in Mus musculus (Mouse).